The chain runs to 207 residues: NADH-quinone oxidoreductase subunit C (207 aa).

The protein belongs to the complex I 30 kDa subunit family. As to quaternary structure, NDH-1 is composed of 14 different subunits. Subunits NuoB, C, D, E, F, and G constitute the peripheral sector of the complex.

The protein resides in the cell inner membrane. The enzyme catalyses a quinone + NADH + 5 H(+)(in) = a quinol + NAD(+) + 4 H(+)(out). Functionally, NDH-1 shuttles electrons from NADH, via FMN and iron-sulfur (Fe-S) centers, to quinones in the respiratory chain. The immediate electron acceptor for the enzyme in this species is believed to be ubiquinone. Couples the redox reaction to proton translocation (for every two electrons transferred, four hydrogen ions are translocated across the cytoplasmic membrane), and thus conserves the redox energy in a proton gradient. In Bordetella pertussis (strain Tohama I / ATCC BAA-589 / NCTC 13251), this protein is NADH-quinone oxidoreductase subunit C.